The sequence spans 398 residues: Succinyl-diaminopimelate desuccinylase (398 aa).

Histidine 73 serves as a coordination point for Zn(2+). The active site involves aspartate 75. Aspartate 106 contacts Zn(2+). The Proton acceptor role is filled by glutamate 140. Zn(2+)-binding residues include glutamate 141, glutamate 169, and histidine 366.

Belongs to the peptidase M20A family. DapE subfamily. Homodimer. It depends on Zn(2+) as a cofactor. Requires Co(2+) as cofactor.

It catalyses the reaction N-succinyl-(2S,6S)-2,6-diaminopimelate + H2O = (2S,6S)-2,6-diaminopimelate + succinate. The protein operates within amino-acid biosynthesis; L-lysine biosynthesis via DAP pathway; LL-2,6-diaminopimelate from (S)-tetrahydrodipicolinate (succinylase route): step 3/3. Catalyzes the hydrolysis of N-succinyl-L,L-diaminopimelic acid (SDAP), forming succinate and LL-2,6-diaminopimelate (DAP), an intermediate involved in the bacterial biosynthesis of lysine and meso-diaminopimelic acid, an essential component of bacterial cell walls. In Agrobacterium fabrum (strain C58 / ATCC 33970) (Agrobacterium tumefaciens (strain C58)), this protein is Succinyl-diaminopimelate desuccinylase.